A 114-amino-acid polypeptide reads, in one-letter code: Small ribosomal subunit protein bS6 (114 aa).

This sequence belongs to the bacterial ribosomal protein bS6 family.

Its function is as follows. Binds together with bS18 to 16S ribosomal RNA. In Phocaeicola vulgatus (strain ATCC 8482 / DSM 1447 / JCM 5826 / CCUG 4940 / NBRC 14291 / NCTC 11154) (Bacteroides vulgatus), this protein is Small ribosomal subunit protein bS6.